We begin with the raw amino-acid sequence, 311 residues long: Heme A synthase (311 aa).

At methionine 1–lysine 6 the chain is on the cytoplasmic side. A helical transmembrane segment spans residues tryptophan 7–threonine 27. At lysine 28–arginine 62 the chain is on the extracellular side. An intrachain disulfide couples cysteine 35 to cysteine 42. Glutamate 58 is an active-site residue. Histidine 61 is a heme o binding site. The chain crosses the membrane as a helical span at residues leucine 63–tyrosine 83. The Cytoplasmic portion of the chain corresponds to lysine 84–threonine 91. The helical transmembrane segment at leucine 92 to valine 112 threads the bilayer. Over tryptophan 113–alanine 121 the chain is Extracellular. A helical membrane pass occupies residues isoleucine 122–phenylalanine 142. Residue histidine 123 coordinates heme o. The Cytoplasmic portion of the chain corresponds to glutamate 143 to methionine 159. The chain crosses the membrane as a helical span at residues lysine 160–valine 180. Residues arginine 181–methionine 211 are Extracellular-facing. Cysteine 189 and cysteine 195 form a disulfide bridge. Residues glycine 212 to isoleucine 232 traverse the membrane as a helical segment. Histidine 213 contributes to the heme b binding site. Residues arginine 233–tryptophan 243 lie on the Cytoplasmic side of the membrane. Residues glycine 244–phenylalanine 264 form a helical membrane-spanning segment. At threonine 265–methionine 271 the chain is on the extracellular side. A helical transmembrane segment spans residues alanine 272–leucine 292. Histidine 275 contacts heme b. The Cytoplasmic portion of the chain corresponds to glycine 293–lysine 311.

The protein belongs to the COX15/CtaA family. Type 1 subfamily. As to quaternary structure, interacts with CtaB. It depends on heme b as a cofactor.

The protein resides in the cell membrane. It catalyses the reaction Fe(II)-heme o + 2 A + H2O = Fe(II)-heme a + 2 AH2. Its pathway is porphyrin-containing compound metabolism; heme A biosynthesis; heme A from heme O: step 1/1. Its function is as follows. Catalyzes the conversion of heme O to heme A by two successive hydroxylations of the methyl group at C8. The first hydroxylation forms heme I, the second hydroxylation results in an unstable dihydroxymethyl group, which spontaneously dehydrates, resulting in the formyl group of heme A. This Bacillus cereus (strain ATCC 14579 / DSM 31 / CCUG 7414 / JCM 2152 / NBRC 15305 / NCIMB 9373 / NCTC 2599 / NRRL B-3711) protein is Heme A synthase.